A 62-amino-acid chain; its full sequence is Disintegrin schistatin-like subunit A (62 aa).

The Disintegrin domain maps to 1-62 (SVNPCCDPVI…TTDCPRNRYN (62 aa)). Disulfide bonds link Cys5–Cys28, Cys19–Cys25, Cys24–Cys49, and Cys37–Cys56. The Cell attachment site motif lies at 41-43 (RGD).

The protein belongs to the disintegrin family. Dimeric disintegrin subfamily. In terms of assembly, heterodimer with subunit B; disulfide-linked. As to expression, expressed by the venom gland.

The protein resides in the secreted. Its function is as follows. May bind to both alpha-IIb/beta-3 (ITGA2B/ITGB3) and alpha-V/beta-3 (ITGAV/ITGB3) integrins, and may inhibit platelet aggregation. The chain is Disintegrin schistatin-like subunit A from Echis carinatus (Saw-scaled viper).